The chain runs to 502 residues: Neuronal acetylcholine receptor subunit alpha-7 (502 aa).

An N-terminal signal peptide occupies residues 1–22; that stretch reads MRCSPGGVWLALAASLLHVSLQ. The Extracellular portion of the chain corresponds to 23 to 233; the sequence is GEFQRKLYKE…VTMRRRTLYY (211 aa). Arg-42 and Val-44 together coordinate Ca(2+). Asn-46, Asn-90, and Asn-133 each carry an N-linked (GlcNAc...) asparagine glycan. A disulfide bond links Cys-150 and Cys-164. Ca(2+) is bound by residues Ser-172 and Tyr-210. A disulfide bridge links Cys-212 with Cys-213. Transmembrane regions (helical) follow at residues 234 to 254, 259 to 279, and 292 to 315; these read GLNL…VFLL, GEKI…MLLV, and LIAQ…VIVL. Residues 260 to 267 form an essential for TMEM35A/NACHO-mediated proper subunit assembly and trafficking to cell membrane region; the sequence is EKISLGIT. Residues 316–466 are Cytoplasmic-facing; it reads QYHHHDPDGG…CSEWKFAACV (151 aa). The chain crosses the membrane as a helical span at residues 467–489; it reads VDRLCLMAFSVFTIICTIGILMS.

It belongs to the ligand-gated ion channel (TC 1.A.9) family. Acetylcholine receptor (TC 1.A.9.1) subfamily. Alpha-7/CHRNA7 sub-subfamily. As to quaternary structure, homopentamer. Can also form heteropentamers with CHRNB2, mainly found in basal forebrain cholinergic neurons. Interacts with RIC3; which is required for proper folding and assembly. Interacts with LYPD6. Interacts with CANX. Glycosylations at Asn-46, Asn-90 and Asn-133 are essential for TMEM35A/NACHO-mediated proper subunit assembly and trafficking to the cell membrane. As to expression, expressed in neuronal cells. Expressed in macrophages (at protein level).

It is found in the postsynaptic cell membrane. Its subcellular location is the cell membrane. The enzyme catalyses Ca(2+)(in) = Ca(2+)(out). It carries out the reaction K(+)(in) = K(+)(out). It catalyses the reaction Na(+)(in) = Na(+)(out). The catalysed reaction is choline(out) = choline(in). The enzyme catalyses NH4(+)(in) = NH4(+)(out). It carries out the reaction L-arginine(in) = L-arginine(out). It catalyses the reaction guanidine(out) = guanidine(in). With respect to regulation, activated by a myriad of ligands such as acetylcholine, cytisine, nicotine, choline and epibatidine. Oligomeric amyloid-beta protein 42 activates specifially CHRNA7:CHRNB2 nAchRs. Activity is modulated by positive allosteric modulators (PAMs), such as flavonoids, with a wide range of chemical diversity, pharmacological sensitivity and efficacy. AChR activity is inhibited by the antagonists alpha-conotoxons RgIA, ImI and ImII, small disulfide-constrained peptides from cone snails. Alpha-conotoxin PnIC selectively inhibits CHRNA7:CHRNB2 over CHRNA7 homopentamer. In terms of biological role, component of neuronal acetylcholine receptors (nAChRs) that function as pentameric, ligand-gated cation channels with high calcium permeability among other activities. nAChRs are excitatory neurotrasnmitter receptors formed by a collection of nAChR subunits known to mediate synaptic transmission in the nervous system and the neuromuscular junction. Each nAchR subunit confers differential attributes to channel properties, including activation, deactivation and desensitization kinetics, pH sensitivity, cation permeability, and binding to allosteric modulators. CHRNA7 forms homopentameric neuronal acetylcholine receptors abundantly expressed in the central nervous system, characterized by fast desensitization and high calcium permeability. Also forms heteropentamers with CHRNB2, mainly expressed in basal forebrain cholinergic neurons. Involved in the modulation of calcium-dependent signaling pathways and influences the release of neurotransmitters, including dopamine, glutamate and GABA. Also expressed in non-neuronal cells such as immune cells like lymphocytes, monocytes and macrophages. In T cells, activation induces metabotropic signaling that results in an increase of intracellular Ca2+ concentrations, independent of ionotropic receptor functions. In macrophages, required for acetylcholine-mediated inhibition of TNF and other inflammatory cytokine release. Once activated by acetylcholine, nicotine or other agonists, selectively inhibits production of pro-inflammatory cytokines while leaving anti-inflammatory cytokines undisturbed. Stimulates the cholinergic anti-inflammatory pathway, controlling inflammation by inhibiting NFKB nuclear translocation and activating the JAK2-STAT3 pathway, independently of ion channel activity. Also expressed in the urothelium where it modulates reflex bladder activity by increasing intracellular calcium through internal stores and decreasing basal ATP release. This Homo sapiens (Human) protein is Neuronal acetylcholine receptor subunit alpha-7.